The following is a 261-amino-acid chain: L-erythrulose-1-phosphate isomerase (261 aa).

H99 acts as the Electrophile in catalysis. Residue E172 is the Proton acceptor of the active site.

Belongs to the triosephosphate isomerase family.

It carries out the reaction L-erythrulose 1-phosphate = D-erythrulose 4-phosphate. It functions in the pathway carbohydrate metabolism. Functionally, involved in catabolism of D-apiose. Catalyzes the isomerization of L-erythrulose 1-phosphate to D-erythrulose 4-phosphate. The protein is L-erythrulose-1-phosphate isomerase of Rhizobium rhizogenes (strain K84 / ATCC BAA-868) (Agrobacterium radiobacter).